The following is a 120-amino-acid chain: Large ribosomal subunit protein uL18 (120 aa).

Belongs to the universal ribosomal protein uL18 family. In terms of assembly, part of the 50S ribosomal subunit; part of the 5S rRNA/L5/L18/L25 subcomplex. Contacts the 5S and 23S rRNAs.

In terms of biological role, this is one of the proteins that bind and probably mediate the attachment of the 5S RNA into the large ribosomal subunit, where it forms part of the central protuberance. The polypeptide is Large ribosomal subunit protein uL18 (Oleidesulfovibrio alaskensis (strain ATCC BAA-1058 / DSM 17464 / G20) (Desulfovibrio alaskensis)).